The sequence spans 162 residues: Disulfide bond formation protein B (162 aa).

Over 1-8 (MTPLFRKA) the chain is Cytoplasmic. Residues 9 to 25 (VWLLFAVSVCAFAGSLA) form a helical membrane-spanning segment. Residues 26–43 (AQYVLGMEPCVLCISQRL) are Periplasmic-facing. A disulfide bridge links Cys35 with Cys38. Residues 44-60 (CVLATALCAAVVLACKP) form a helical membrane-spanning segment. The Cytoplasmic segment spans residues 61 to 67 (KGRVGGL). A helical membrane pass occupies residues 68–85 (SGAVFISIPAVTGISVAA). Residues 86 to 141 (YQLWLQSLPPGAAPSCGAPWTFRLKGWPLFDWFEPVVRGFGNCAEPDYLLGVALPV) lie on the Periplasmic side of the membrane. A disulfide bridge connects residues Cys101 and Cys128. The helical transmembrane segment at 142–160 (WSAAYFLAVVLTVWWAWAR) threads the bilayer. Over 161 to 162 (AK) the chain is Cytoplasmic.

The protein belongs to the DsbB family.

It is found in the cell inner membrane. Its function is as follows. Required for disulfide bond formation in some periplasmic proteins. Acts by oxidizing the DsbA protein. The chain is Disulfide bond formation protein B from Neisseria gonorrhoeae (strain ATCC 700825 / FA 1090).